A 431-amino-acid chain; its full sequence is tRNA(Ile)-lysidine synthase (431 aa).

S25–S30 contributes to the ATP binding site.

Belongs to the tRNA(Ile)-lysidine synthase family.

Its subcellular location is the cytoplasm. The enzyme catalyses cytidine(34) in tRNA(Ile2) + L-lysine + ATP = lysidine(34) in tRNA(Ile2) + AMP + diphosphate + H(+). Its function is as follows. Ligates lysine onto the cytidine present at position 34 of the AUA codon-specific tRNA(Ile) that contains the anticodon CAU, in an ATP-dependent manner. Cytidine is converted to lysidine, thus changing the amino acid specificity of the tRNA from methionine to isoleucine. The polypeptide is tRNA(Ile)-lysidine synthase (Lactobacillus gasseri (strain ATCC 33323 / DSM 20243 / BCRC 14619 / CIP 102991 / JCM 1131 / KCTC 3163 / NCIMB 11718 / NCTC 13722 / AM63)).